The chain runs to 159 residues: Probable inactive acireductone dioxygenase 1 (159 aa).

Belongs to the acireductone dioxygenase (ARD) family.

It is found in the cytoplasm. The protein resides in the nucleus. Its function is as follows. Probable inactive acireductone dioxygenase. This is Probable inactive acireductone dioxygenase 1 from Caenorhabditis elegans.